The chain runs to 371 residues: Ecto-ADP-ribosyltransferase 3 (371 aa).

An N-terminal signal peptide occupies residues 1–26 (MKMGHFEMVTTLLAAAVLMDIFQVKA). C43 and C255 are joined by a disulfide. The TR mART core domain maps to 64–250 (ALLRMVWDNA…LVLQSINSTC (187 aa)). NAD(+) contacts are provided by Y101 and N182. A disordered region spans residues 306–346 (VLQTEENPLLPDEKPDRSRGKANNPTPGLVPGPKSHPSASS). S345 carries GPI-anchor amidated serine lipidation. Positions 346–371 (SGNTLLPSVMASTILLVASAVNFIEL) are cleaved as a propeptide — removed in mature form.

It belongs to the Arg-specific ADP-ribosyltransferase family.

The protein localises to the cell membrane. It catalyses the reaction L-arginyl-[protein] + NAD(+) = N(omega)-(ADP-D-ribosyl)-L-arginyl-[protein] + nicotinamide + H(+). The chain is Ecto-ADP-ribosyltransferase 3 (Art3) from Mus musculus (Mouse).